Consider the following 283-residue polypeptide: MNTVKTVRELRAAVTHARSAGKRIGFVPTMGNLHSGHATLVTKAAQQADFVVASIFVNPLQFGAGEDLDKYPRTLAADQEKLLQAGCNLLFAPTVEEMYPGGMTGQTRVSVPQLSEGLCGASRPGHFEGVATVVSKLFNMVQPDMAVFGQKDYQQLAVIRAMVHDLNMPIQIIGEPTVRADDGLALSSRNGYLTDEQRAIAPVLYRSLSQIGAAIKAGDHDFAKLRAEQVQQIEAAGLRLDYFEVRQGVHLRPATPEDRDIVILVAAYLGATRLIDNLHLTLD.

ATP is bound at residue 30–37 (MGNLHSGH). Residue H37 is the Proton donor of the active site. Q61 lines the (R)-pantoate pocket. A beta-alanine-binding site is contributed by Q61. 149–152 (GQKD) provides a ligand contact to ATP. Q155 is a binding site for (R)-pantoate. Residues V178 and 186-189 (LSSR) contribute to the ATP site.

This sequence belongs to the pantothenate synthetase family. Homodimer.

It is found in the cytoplasm. It carries out the reaction (R)-pantoate + beta-alanine + ATP = (R)-pantothenate + AMP + diphosphate + H(+). It participates in cofactor biosynthesis; (R)-pantothenate biosynthesis; (R)-pantothenate from (R)-pantoate and beta-alanine: step 1/1. Its function is as follows. Catalyzes the condensation of pantoate with beta-alanine in an ATP-dependent reaction via a pantoyl-adenylate intermediate. The sequence is that of Pantothenate synthetase from Pseudomonas fluorescens (strain SBW25).